We begin with the raw amino-acid sequence, 727 residues long: Tubulin polyglutamylase TTLL11 (727 aa).

The segment covering 1–12 has biased composition (basic and acidic residues); the sequence is MRRSSPEKKPEA. The segment at 1–88 is disordered; the sequence is MRRSSPEKKP…ARVVRRLPPA (88 aa). Over residues 17 to 34 the composition is skewed to low complexity; the sequence is DAAAAAAATAAATESLPA. 2 stretches are compositionally biased toward basic and acidic residues: residues 49–63 and 72–81; these read DPERLELEEQPKDVG and HAPEEGEARV. The TTL domain occupies 125-477; the sequence is PVTVDSSKAR…EVKVAVIRDT (353 aa). ATP contacts are provided by residues Lys-246, 252-253, 279-282, and 292-294; these read QG, QEYI, and KFD. Gln-252 lines the a protein pocket. L-glutamate is bound at residue Arg-318. Residue 340-341 participates in ATP binding; that stretch reads TN. L-glutamate contacts are provided by Tyr-342, Ser-343, and Lys-362. 3 residues coordinate Mg(2+): Asp-425, Glu-438, and Asn-440. The segment at 464–566 is c-MTBD region; that stretch reads LVDEEVKVAV…SICLKQVFPK (103 aa). Position 470 (Lys-470) interacts with L-glutamate. Disordered regions lie at residues 530 to 551 and 694 to 727; these read KSFTSKEDLNCDPTGGDSEPNP and RPLQRNPPQMNRPEHSATGSSAPRVIGASKLSQS.

The protein belongs to the tubulin--tyrosine ligase family. It depends on Mg(2+) as a cofactor. Highly expressed in brain, kidney, liver, lung, muscle and testis. Expressed in heart, spleen and trachea. In the brain, expressed in ependymal cilia, cortex, corpus callosum and striatum.

It is found in the cytoplasm. Its subcellular location is the cytoskeleton. The protein resides in the cilium basal body. It catalyses the reaction L-glutamyl-[protein] + L-glutamate + ATP = gamma-L-glutamyl-L-glutamyl-[protein] + ADP + phosphate + H(+). It carries out the reaction (L-glutamyl)(n)-gamma-L-glutamyl-L-glutamyl-[protein] + L-glutamate + ATP = (L-glutamyl)(n+1)-gamma-L-glutamyl-L-glutamyl-[protein] + ADP + phosphate + H(+). Polyglutamylase which modifies tubulin, generating polyglutamate side chains of variable lengths on the gamma-carboxyl group of specific glutamate residues within the C-terminal tail of tubulin. Preferentially mediates ATP-dependent polyglutamate long side-chain elongation over the initiation step of the polyglutamylation reaction. Preferentially modifies the alpha-tubulin tail over a beta-tail. Required for CCSAP localization to both spindle and cilia microtubules. Promotes tubulin polyglutamylation which stimulates spastin/SPAST-mediated microtubule severing, thereby regulating microtubule functions. This is Tubulin polyglutamylase TTLL11 from Mus musculus (Mouse).